Here is a 1071-residue protein sequence, read N- to C-terminus: Intracellular phospholipase A2 (1071 aa).

Residues Met1–Pro22 form a disordered region. ANK repeat units follow at residues Glu411–Cys440, Asp479–Arg508, Asp510–Asn539, Leu544–Leu570, Ala578–Ala610, His614–Leu651, and Arg652–Pro681. The region spanning Ile748–Met921 is the PNPLA domain. The short motif at Gly752–Gly757 is the GXGXXG element. Positions Gly784–Gly788 match the GXSXG motif. Ser786 functions as the Nucleophile in the catalytic mechanism. Asp908 serves as the catalytic Proton acceptor. The short motif at Asp908 to Gly910 is the DGA/G element.

Belongs to the patatin family.

The catalysed reaction is a 1,2-diacyl-sn-glycero-3-phosphocholine + H2O = a 1-acyl-sn-glycero-3-phosphocholine + a fatty acid + H(+). In terms of biological role, phospholipase that plays a critical role during oogenesis, ovulation, and/or embryogenesis. The protein is Intracellular phospholipase A2 of Caenorhabditis elegans.